A 335-amino-acid chain; its full sequence is Probable cytosolic iron-sulfur protein assembly protein Ciao1 (335 aa).

WD repeat units lie at residues 12–51 (GHKG…WTTK), 57–96 (GHKR…FECN), 101–140 (GHEN…EFEC), 146–185 (PHTQ…SDWD), 192–231 (SHTS…NDAG), 250–289 (QHSR…KRDE), and 301–335 (AHDQ…KMTE).

The protein belongs to the WD repeat CIA1 family.

Functionally, essential component of the cytosolic iron-sulfur (Fe/S) protein assembly machinery. Required for the maturation of extramitochondrial Fe/S proteins. The chain is Probable cytosolic iron-sulfur protein assembly protein Ciao1 from Drosophila ananassae (Fruit fly).